The sequence spans 491 residues: MSDILRRGRLASVPDEEIINFTSSMNADKWIFKADILVDLAHTIMLKERKIIKAEDCKKILEGLLTIKEEGIEKLDHTYEDIHISLESRLIDMVGEDTGGRMHSGRSRNDEVATCIRLTLRNDLLLLMEELIALRNTLNDTSSENLNTLMPGFTHLQHAQPTTLAHHLTAHANAIGRDLERTMDCYKRVNLSPLGAAAFASTGFDLDRERTCKLLGFDGLIENSMDAVSSRDFLIESASVFANLMINLSKVAEEIVIWSTSEFAFIELDDRYASTSSIMPQKKNPDTAELLRGKSGVTIGSLMSLLAICKALPLSYNRDLQEATPNIMQSLETTRASVRIMNGMIATMSINKENMAGLATAGFTTATELADTMVRVCDIPFRTAHQIVGVLARGSGEPTLGEIDAVAHNVIGESLSSRGLTEKMVKEALDPILNVSKRSVIGGPSPESMERLIESSRERIANNTEILESLIANRDNAIESLFCEVEKCIDV.

The protein belongs to the lyase 1 family. Argininosuccinate lyase subfamily.

The protein localises to the cytoplasm. The catalysed reaction is 2-(N(omega)-L-arginino)succinate = fumarate + L-arginine. It participates in amino-acid biosynthesis; L-arginine biosynthesis; L-arginine from L-ornithine and carbamoyl phosphate: step 3/3. The chain is Argininosuccinate lyase from Methanococcoides burtonii (strain DSM 6242 / NBRC 107633 / OCM 468 / ACE-M).